We begin with the raw amino-acid sequence, 289 residues long: MTKDELTEEESLSGKDYLDPPPVKTFEVRELKKWSFYRAVIAEFIATLLFLYVTVLTVIGFKSQTDINAGGGACASVGLLGISWAFGGMIFILVYCTAGISGGHINPAVTFGLFLASKVSLVRAVSYMVAQCLGATCGVGLVKVFQSTYYNRYGGGANMLSDGYNVGVGVGAEIIGTFVLVYTVFSATDPKRNARDSHIPVLAPLPIGFSVFMVHLATIPITGTGINPARSFGAAVIYNNQKAWDDQWIFWVGPFVGAAIAAFYHQFVLRAGAMKAYGSVRSQLHELHA.

Position 1 is an N-acetylmethionine (methionine 1). The Cytoplasmic portion of the chain corresponds to 1-38; it reads MTKDELTEEESLSGKDYLDPPPVKTFEVRELKKWSFYR. Phosphothreonine is present on threonine 7. A Phosphoserine modification is found at serine 11. The chain crosses the membrane as a helical span at residues 39-59; that stretch reads AVIAEFIATLLFLYVTVLTVI. Over 60 to 80 the chain is Extracellular; that stretch reads GFKSQTDINAGGGACASVGLL. Residues 81–101 form a helical membrane-spanning segment; the sequence is GISWAFGGMIFILVYCTAGIS. Residues 102-124 lie on the Cytoplasmic side of the membrane; the sequence is GGHINPAVTFGLFLASKVSLVRA. The short motif at 106 to 108 is the NPA 1 element; that stretch reads NPA. Residues 125-145 traverse the membrane as a helical segment; it reads VSYMVAQCLGATCGVGLVKVF. Over 146–165 the chain is Extracellular; the sequence is QSTYYNRYGGGANMLSDGYN. The chain crosses the membrane as a helical span at residues 166 to 186; it reads VGVGVGAEIIGTFVLVYTVFS. At 187-200 the chain is on the cytoplasmic side; that stretch reads ATDPKRNARDSHIP. A helical membrane pass occupies residues 201-221; it reads VLAPLPIGFSVFMVHLATIPI. The Extracellular segment spans residues 222-248; sequence TGTGINPARSFGAAVIYNNQKAWDDQW. The NPA 2 motif lies at 227-229; it reads NPA. Residues 249-269 form a helical membrane-spanning segment; sequence IFWVGPFVGAAIAAFYHQFVL. At 270–289 the chain is on the cytoplasmic side; it reads RAGAMKAYGSVRSQLHELHA. Residues serine 279 and serine 282 each carry the phosphoserine modification.

This sequence belongs to the MIP/aquaporin (TC 1.A.8) family. PIP (TC 1.A.8.11) subfamily. As to expression, expressed above ground, and in flower buds.

It is found in the cell membrane. Its function is as follows. Aquaporins facilitate the transport of water and small neutral solutes across cell membranes. The sequence is that of Probable aquaporin PIP2-6 (PIP2-6) from Arabidopsis thaliana (Mouse-ear cress).